The sequence spans 86 residues: Cell division topological specificity factor (86 aa).

This sequence belongs to the MinE family.

Functionally, prevents the cell division inhibition by proteins MinC and MinD at internal division sites while permitting inhibition at polar sites. This ensures cell division at the proper site by restricting the formation of a division septum at the midpoint of the long axis of the cell. This is Cell division topological specificity factor from Shewanella loihica (strain ATCC BAA-1088 / PV-4).